A 309-amino-acid chain; its full sequence is Large ribosomal subunit protein uL22m (309 aa).

Residues 1-25 (MNFHTARISQVGVISRALLSSVSRR) constitute a mitochondrion transit peptide. The disordered stretch occupies residues 40-63 (SLFGSITENKPKEGKNRGDEDAGS). Over residues 48–59 (NKPKEGKNRGDE) the composition is skewed to basic and acidic residues.

It belongs to the universal ribosomal protein uL22 family. Component of the mitochondrial large ribosomal subunit (mt-LSU). Mature yeast 74S mitochondrial ribosomes consist of a small (37S) and a large (54S) subunit. The 37S small subunit contains a 15S ribosomal RNA (15S mt-rRNA) and 34 different proteins. The 54S large subunit contains a 21S rRNA (21S mt-rRNA) and 46 different proteins. uL22m forms the wall of the exit tunnel.

Its subcellular location is the mitochondrion. Component of the mitochondrial ribosome (mitoribosome), a dedicated translation machinery responsible for the synthesis of mitochondrial genome-encoded proteins, including at least some of the essential transmembrane subunits of the mitochondrial respiratory chain. The mitoribosomes are attached to the mitochondrial inner membrane and translation products are cotranslationally integrated into the membrane. The sequence is that of Large ribosomal subunit protein uL22m (MRPL22) from Saccharomyces cerevisiae (strain ATCC 204508 / S288c) (Baker's yeast).